The sequence spans 679 residues: MSAPKNEMYYSLLEWFKTLNLNAPHADAESLADGVALAQALNQFAPESFTDAWLSKIKASAVGSNWRLRMSNLKKVTQSVYDYYSDVLNYSLSDFSKPDLQRIAEKCDLGELERLLQLVLGCAVNCAEKQSYITEIMCLEEELQANIMRALQELEATRQASTPEGGVASSLSRGSRTGLLDSKAVQEDRDALAQKCFETEKKMLLLIDEKTNLQQELHKLQQEFARLEQHSTVIGDDGVSLGPVQTGSVRYNELRRQLDLLKEELLQSEGAREDLKIKAQQQDTDLLHMQMRIEELMKSSAEVTTLKDEVDVLRESNDKLKICEAQLDTYKKKLEDYNDLKKQVKILEERSADYVQQNAQFEEDAKRYANTKGQVELFKKEIQDLHAKLDAESSKNVKLEFDNKNLESKNLALQRAKDSLLKERDNLREAVDELKCGQLSSNTALTGTTVSRELQPSATVEKLQRLEAENKALREGQGGQTALAQLLDDANKRCENLREQLKTANERILSLSHASQSDDPILKESEFGKQIKQLMELNEQKTLQLEEAVTQSTSLQCKVTQLETNLSAREQEILVYDAKYRKCVEKAKEVIKSIDPRIASALDASVLEKSADLVEEEPKPKMSVMEEQLMTSAFYRLGVNAQRDAIDSKLAILMGSGQTFLARQRQSAPRKSLSAMKSK.

The interaction with microtubules stretch occupies residues 1–155; the sequence is MSAPKNEMYY…NIMRALQELE (155 aa). A Calponin-homology (CH) domain is found at 6 to 123; that stretch reads NEMYYSLLEW…RLLQLVLGCA (118 aa). Coiled coils occupy residues 135 to 437 and 480 to 574; these read EIMC…LKCG and QTAL…QEIL.

The protein belongs to the hook family. As to quaternary structure, homodimer. Interacts with microtubules via its N-terminus.

The protein resides in the cytoplasm. Its subcellular location is the cytoskeleton. It localises to the endosome. The protein localises to the synapse. Involved in endocytic trafficking by stabilizing organelles of the endocytic pathway. Probably acts as a cytoskeletal linker protein required to tether endosome vesicles to the cytoskeleton. Involved in modulation of endocytosis at stages required for down-regulation of membrane proteins that control synapse size. Not involved in synaptic vesicle recycling. Required in R7 cells for boss endocytosis into multivesicular bodies (MVBs). Has a role in regulating adult longevity. This is Protein hook from Drosophila melanogaster (Fruit fly).